Reading from the N-terminus, the 825-residue chain is Translation initiation factor IF-2 (825 aa).

Composition is skewed to basic and acidic residues over residues 1 to 19 (MTKK…DNKK), 35 to 45 (RKGEKKTEGKR), 70 to 98 (LLKD…EYKK), and 113 to 122 (KKVESVEKPA). A disordered region spans residues 1-239 (MTKKQENETS…TQRKDRPLPE (239 aa)). The span at 158 to 169 (PSSSRRPSSRPS) shows a compositional bias: low complexity. Residues 181-191 (GRRRKSGKPGR) show a composition bias toward basic residues. Residues 194–208 (QNSYADQGRGANSNR) show a composition bias toward polar residues. Residues 211 to 220 (QRKRKNKKHQ) are compositionally biased toward basic residues. Residues 326 to 495 (VRPPVVTIMG…ILEADMLELK (170 aa)) form the tr-type G domain. The interval 335 to 342 (GHVDHGKT) is G1. 335–342 (GHVDHGKT) is a binding site for GTP. The segment at 360–364 (GITQN) is G2. Residues 381-384 (DTPG) form a G3 region. GTP is bound by residues 381-385 (DTPGH) and 435-438 (NKMD). A G4 region spans residues 435–438 (NKMD). The G5 stretch occupies residues 471–473 (SAK).

Belongs to the TRAFAC class translation factor GTPase superfamily. Classic translation factor GTPase family. IF-2 subfamily.

The protein resides in the cytoplasm. Functionally, one of the essential components for the initiation of protein synthesis. Protects formylmethionyl-tRNA from spontaneous hydrolysis and promotes its binding to the 30S ribosomal subunits. Also involved in the hydrolysis of GTP during the formation of the 70S ribosomal complex. The protein is Translation initiation factor IF-2 of Lactobacillus delbrueckii subsp. bulgaricus (strain ATCC 11842 / DSM 20081 / BCRC 10696 / JCM 1002 / NBRC 13953 / NCIMB 11778 / NCTC 12712 / WDCM 00102 / Lb 14).